Consider the following 149-residue polypeptide: Ribonuclease HI (149 aa).

The RNase H type-1 domain maps to 1–140 (MIIGYFDGLC…AYELVRRGKL (140 aa)). D7, E52, D76, and D125 together coordinate Mg(2+). Mn(2+) is bound by residues D7, E52, D76, and D125. C58 and C145 are oxidised to a cystine.

In terms of assembly, monomer. Mn(2+) is required as a cofactor. Mg(2+) serves as cofactor. Requires Co(2+) as cofactor. It depends on Ni(2+) as a cofactor. Post-translationally, the disulfide bond confers considerable stability to the protein.

Its subcellular location is the cytoplasm. The catalysed reaction is Endonucleolytic cleavage to 5'-phosphomonoester.. Functionally, nuclease that specifically degrades the RNA of RNA-DNA hybrids. Endonucleolytically removes RNA primers from the Okazaki fragments of lagging strand synthesis on its own. In the presence of Mn(2+) or Co(2+) can also cleave an RNA-RNA hybrid; the dsRNase activity is 10- 100-fold lower than RNase H activity. Complements the temperature-sensitive phenotype of an E.coli double rnhA/rnhB (RNase H) disruption mutant. The protein is Ribonuclease HI (rnhA) of Sulfurisphaera tokodaii (strain DSM 16993 / JCM 10545 / NBRC 100140 / 7) (Sulfolobus tokodaii).